The sequence spans 703 residues: Polyribonucleotide nucleotidyltransferase (703 aa).

Mg(2+)-binding residues include Asp486 and Asp492. The 60-residue stretch at 554–613 (PKIITTNIDPEKIRDVIGPGGKMINKIIAETGVKIDIEEDGRVYILTPDSAAAQKALKII) folds into the KH domain. The region spanning 623-691 (GEVYLGKVVR…KQGRINLSRK (69 aa)) is the S1 motif domain.

Belongs to the polyribonucleotide nucleotidyltransferase family. The cofactor is Mg(2+).

The protein resides in the cytoplasm. The catalysed reaction is RNA(n+1) + phosphate = RNA(n) + a ribonucleoside 5'-diphosphate. Functionally, involved in mRNA degradation. Catalyzes the phosphorolysis of single-stranded polyribonucleotides processively in the 3'- to 5'-direction. The sequence is that of Polyribonucleotide nucleotidyltransferase from Ruminiclostridium cellulolyticum (strain ATCC 35319 / DSM 5812 / JCM 6584 / H10) (Clostridium cellulolyticum).